Consider the following 88-residue polypeptide: Large ribosomal subunit protein bL31B (88 aa).

This sequence belongs to the bacterial ribosomal protein bL31 family. Type B subfamily. In terms of assembly, part of the 50S ribosomal subunit.

The polypeptide is Large ribosomal subunit protein bL31B (Janthinobacterium sp. (strain Marseille) (Minibacterium massiliensis)).